A 214-amino-acid polypeptide reads, in one-letter code: Probable nicotinate-nucleotide adenylyltransferase (214 aa).

The protein belongs to the NadD family.

It carries out the reaction nicotinate beta-D-ribonucleotide + ATP + H(+) = deamido-NAD(+) + diphosphate. Its pathway is cofactor biosynthesis; NAD(+) biosynthesis; deamido-NAD(+) from nicotinate D-ribonucleotide: step 1/1. Its function is as follows. Catalyzes the reversible adenylation of nicotinate mononucleotide (NaMN) to nicotinic acid adenine dinucleotide (NaAD). This is Probable nicotinate-nucleotide adenylyltransferase from Mycobacterium tuberculosis (strain ATCC 25177 / H37Ra).